Reading from the N-terminus, the 219-residue chain is Sugar transporter SWEET1 (219 aa).

7 helical membrane-spanning segments follow: residues 3–23, 38–58, 63–83, 98–118, 125–145, 156–176, and 189–209; these read FLQL…TTGL, VQFL…YYGL, GTVI…IATY, LLMV…ISPG, LGLT…ADLL, LSFS…LYGL, and PGIF…AVIP. In terms of domain architecture, MtN3/slv 1 spans 5–90; sequence QLLSCACIIF…ATYCHYTKEK (86 aa). In terms of domain architecture, MtN3/slv 2 spans 124-204; the sequence is QLGLTCSVFT…LIRFFLFWWF (81 aa).

This sequence belongs to the SWEET sugar transporter family.

Its subcellular location is the golgi apparatus membrane. The protein resides in the cell membrane. In terms of biological role, mediates sugar transport across membranes. The chain is Sugar transporter SWEET1 (slc50a1) from Danio rerio (Zebrafish).